The following is a 440-amino-acid chain: MFLAQEIIRKKRDGQPLSEEEIRFFINGIRDNVVSEGQIAALAMTIYFHDMSMPERVALTMAMRDSGTVLNWKSLNLNGPLVDKHSTGGVGDVTSLMLGPMVAACGGYVPMISGRGLGHTGGTLDKLEAIPGFDIFPDDNAFRKIIQNVGVAIIGQTSSLAPADKRFYATRDITATVDSIPLITASILAKKLAEGLDALVMDVKVGSGAFMPTYSLSADLAQAIVGVANGAGCKTTALLTDMNQVLASSAGNGVEVREAVRFLTGEYRNPRLLEVTMALCVEMLLSGGLAHDEADARAKLQAVLDNGKAAEVFGRMVAAQKGPVDFVERYDSYLPVATLSKPVFAEQTGIITAMDTRALGMAVVALGGGRRRATDPIDYSVGLTEMARLGTRVDGQQPLAVIHANNEDDWQQAAEAVRAAITLGNNAPEETPVIYRRITE.

The protein belongs to the thymidine/pyrimidine-nucleoside phosphorylase family. As to quaternary structure, homodimer.

It carries out the reaction thymidine + phosphate = 2-deoxy-alpha-D-ribose 1-phosphate + thymine. It participates in pyrimidine metabolism; dTMP biosynthesis via salvage pathway; dTMP from thymine: step 1/2. Functionally, the enzymes which catalyze the reversible phosphorolysis of pyrimidine nucleosides are involved in the degradation of these compounds and in their utilization as carbon and energy sources, or in the rescue of pyrimidine bases for nucleotide synthesis. This Yersinia pseudotuberculosis serotype O:1b (strain IP 31758) protein is Thymidine phosphorylase.